The primary structure comprises 968 residues: RNA polymerase-associated protein RapA (968 aa).

The region spanning 164–334 (DVGRRHAPRV…FARLRLLDPN (171 aa)) is the Helicase ATP-binding domain. An ATP-binding site is contributed by 177–184 (DEVGLGKT). A DEAH box motif is present at residues 280 to 283 (DEAH). A Helicase C-terminal domain is found at 490-662 (RVEWLMGYLT…YLASPDETEG (173 aa)).

The protein belongs to the SNF2/RAD54 helicase family. RapA subfamily. As to quaternary structure, interacts with the RNAP. Has a higher affinity for the core RNAP than for the holoenzyme. Its ATPase activity is stimulated by binding to RNAP.

In terms of biological role, transcription regulator that activates transcription by stimulating RNA polymerase (RNAP) recycling in case of stress conditions such as supercoiled DNA or high salt concentrations. Probably acts by releasing the RNAP, when it is trapped or immobilized on tightly supercoiled DNA. Does not activate transcription on linear DNA. Probably not involved in DNA repair. The sequence is that of RNA polymerase-associated protein RapA from Escherichia coli O81 (strain ED1a).